Consider the following 185-residue polypeptide: Elongation factor P (185 aa).

The protein belongs to the elongation factor P family.

The protein localises to the cytoplasm. It participates in protein biosynthesis; polypeptide chain elongation. In terms of biological role, involved in peptide bond synthesis. Stimulates efficient translation and peptide-bond synthesis on native or reconstituted 70S ribosomes in vitro. Probably functions indirectly by altering the affinity of the ribosome for aminoacyl-tRNA, thus increasing their reactivity as acceptors for peptidyl transferase. The protein is Elongation factor P of Clostridium perfringens (strain ATCC 13124 / DSM 756 / JCM 1290 / NCIMB 6125 / NCTC 8237 / Type A).